Consider the following 433-residue polypeptide: GTPase Der (433 aa).

EngA-type G domains are found at residues 5–167 (KKVL…GEAN) and 174–349 (IKVG…DQLE). GTP contacts are provided by residues 11 to 18 (GRPNVGKS), 58 to 62 (DTGGF), 119 to 122 (NKVD), 180 to 187 (GKPNSGKS), 227 to 231 (DTAGI), and 292 to 295 (SKWD). One can recognise a KH-like domain in the interval 350–429 (FKTSTPDLNK…PILVELREKI (80 aa)).

It belongs to the TRAFAC class TrmE-Era-EngA-EngB-Septin-like GTPase superfamily. EngA (Der) GTPase family. As to quaternary structure, associates with the 50S ribosomal subunit.

Its function is as follows. GTPase that plays an essential role in the late steps of ribosome biogenesis. The protein is GTPase Der of Borreliella afzelii (strain PKo) (Borrelia afzelii).